The primary structure comprises 447 residues: N-succinylarginine dihydrolase (447 aa).

Substrate contacts are provided by residues Ala19–Ser28, Asn110, and His137–Arg138. The active site involves Glu174. Arg212 is a binding site for substrate. Residue His248 is part of the active site. Substrate contacts are provided by Asp250 and Asn359. Cys365 functions as the Nucleophile in the catalytic mechanism.

The protein belongs to the succinylarginine dihydrolase family. In terms of assembly, homodimer.

The enzyme catalyses N(2)-succinyl-L-arginine + 2 H2O + 2 H(+) = N(2)-succinyl-L-ornithine + 2 NH4(+) + CO2. It participates in amino-acid degradation; L-arginine degradation via AST pathway; L-glutamate and succinate from L-arginine: step 2/5. Functionally, catalyzes the hydrolysis of N(2)-succinylarginine into N(2)-succinylornithine, ammonia and CO(2). This is N-succinylarginine dihydrolase from Citrobacter koseri (strain ATCC BAA-895 / CDC 4225-83 / SGSC4696).